The chain runs to 247 residues: Cell division protein ZapD (247 aa).

This sequence belongs to the ZapD family. In terms of assembly, interacts with FtsZ.

The protein resides in the cytoplasm. In terms of biological role, cell division factor that enhances FtsZ-ring assembly. Directly interacts with FtsZ and promotes bundling of FtsZ protofilaments, with a reduction in FtsZ GTPase activity. The protein is Cell division protein ZapD of Salmonella agona (strain SL483).